We begin with the raw amino-acid sequence, 793 residues long: Protocadherin beta-7 (793 aa).

The first 26 residues, 1-26 (MEARVERAVQKRQVLFLCVFLGMSWA), serve as a signal peptide directing secretion. At 27–688 (GAEPLRYFVA…DQANSLTVYL (662 aa)) the chain is on the extracellular side. 5 consecutive Cadherin domains span residues 35–133 (VAEE…APVF), 138–242 (ISLK…APDF), 247–347 (YKVQ…RPEL), 352–451 (LTSP…APAF), and 456–561 (YTLF…SPFV). Residue asparagine 169 is glycosylated (N-linked (GlcNAc...) asparagine). Residues asparagine 418 and asparagine 436 are each glycosylated (N-linked (GlcNAc...) asparagine). N-linked (GlcNAc...) asparagine glycosylation is present at asparagine 567. The Cadherin 6 domain occupies 568-671 (SSAPCTEPLP…LVDGFSQPYL (104 aa)). The chain crosses the membrane as a helical span at residues 689-709 (VVALASVSSLFLLSVLLFVAV). The Cytoplasmic segment spans residues 710 to 793 (RLCRRSRAAP…NRPFQNNLGF (84 aa)).

It is found in the cell membrane. Functionally, potential calcium-dependent cell-adhesion protein. May be involved in the establishment and maintenance of specific neuronal connections in the brain. The chain is Protocadherin beta-7 (PCDHB7) from Homo sapiens (Human).